A 1013-amino-acid polypeptide reads, in one-letter code: Dichlorochromopyrrolate synthase (1013 aa).

Belongs to the RebD family. Homodimer. Heme is required as a cofactor.

The enzyme catalyses 2 3-(7-chloroindol-3-yl)-2-iminopropanoate + H2O2 = dichlorochromopyrrolate + NH4(+) + 2 H2O + H(+). It carries out the reaction 2 2-iminio-3-(indol-3-yl)propanoate + H2O2 = chromopyrrolate + NH4(+) + 2 H2O + H(+). It catalyses the reaction 2 H2O2 = O2 + 2 H2O. Involved in the biosynthesis of the indolocarbazole antitumor agent rebeccamycin. Catalyzes the hydrogen peroxide-dependent dimerization of two L-tryptophan-derived molecules (imine form of indole 3-pyruvate (IPA)), to form dichlorochromopyrrolic acid (CPA), the precursor for the six-ring bisindolopyrrolocarbazole scaffold of the rebeccamycin. The hydrogen peroxide is provided together with iminoindolpropanoate by RebO. Due to the instability of indole 3-pyruvate (IPA), which is hydrolyzed in solution and exits in equilibrium with the predominant ketone form of IPA, the concerted functioning of the RebO/RebD system appears to prevent the buildup of significant amounts of IPA and its imine in solution, effectively shepherding the imine further down the biosynthetic chain. The chain is Dichlorochromopyrrolate synthase (rebD) from Lentzea aerocolonigenes (Lechevalieria aerocolonigenes).